A 524-amino-acid chain; its full sequence is Rho guanine nucleotide exchange factor 3 (524 aa).

The interval 75–98 (SDSRPDLFSPRPWSRNTPAANTKR) is disordered. The DH domain occupies 121 to 303 (IKRQEAIFEL…IQGIVAEINI (183 aa)). In terms of domain architecture, PH spans 290-448 (AINIIQGIVA…QWLNCIRQAK (159 aa)).

It localises to the cytoplasm. Functionally, acts as a guanine nucleotide exchange factor (GEF) for RhoA and RhoB GTPases. The polypeptide is Rho guanine nucleotide exchange factor 3 (Arhgef3) (Gallus gallus (Chicken)).